An 869-amino-acid chain; its full sequence is MSTATLEQRAKRGEAPRANDAGHCAHPADGARRGYPRERIDAACDAACRSIAPAWPLDRAIAVNPHWERIGRPVREIAARMAVLADIKVFPPREQIRSAWESARIAPADLRYALQALPAAQAAGMTERNCIDALARPLNLPRLPLLIDVLDDDPLRHERLSWRQAITHQVSQTCAAYFDEHQADWRPHHDQSLYAFWRDTISHDHGIGVLMGLPRLGQSLRALPATRQEAEAWVLERLGLPEAVWPDYLEAVLLTVNGWASWCAYLGWQARLAGESDEHLRDLLAIRLAWGVLLLDCKDDAAARRAFAAVQGHWRDSAALLADAQARLLVDEVWQLAFEAGYQRELAGKLGAVGQPQTIPEAATPAEEIEVQAAFCIDVRSEPLRRAVESIWPAVQTIGFAGFFGLPVAYTPLATSARRPQLPGLLAPSLEVTDAVSGPAGEGGGTMRAAASTARRTRFALSNQASAATRLPGTSFSFVEAAGLGYLGKLRQWLKPSRNPRVRDDLAGLPPRYKAVCRPALVGIDDQAKADLAARILHGMGIARSLAPLVVLVGHASQSANNAHAAALDCGACCGQSGEVNVRVLAQLLNDRATRAGLAQRGIDVPDDTTFVAALHNTTTDEIEGFDVDLLNPIAAARWAKLLSVFGHASDQVRRERAVRVGLDPRMEGGRLLASLRERANDGAQTRPEWGLAGNAAFVIGPRTRSHGAVLDGRCFLHDYDFTQDTDGSLLELLMTAPMLVAHWINWQYHASTCDPAHMGCGNKVLHNVVGGHIGVFEGNSGDLRIGLSKQSLHDGQRWMHEPLRLTVIIDAPGASIERVIDRHPTVRHLIDHGWLHLWRFGETGLLRFSDRQWHPLAMGADPATRQSP.

The disordered stretch occupies residues 1 to 32; sequence MSTATLEQRAKRGEAPRANDAGHCAHPADGAR. Basic and acidic residues predominate over residues 8-17; sequence QRAKRGEAPR. Zn(2+) is bound by residues Cys376, Asp378, His555, and Cys570.

This sequence belongs to the inorganic carbon transporter (TC 9.A.2) DabA family. In terms of assembly, forms a complex with DabB. It depends on Zn(2+) as a cofactor.

The protein resides in the cell inner membrane. Functionally, part of an energy-coupled inorganic carbon pump. This chain is Probable inorganic carbon transporter subunit DabA, found in Burkholderia multivorans (strain ATCC 17616 / 249).